A 352-amino-acid chain; its full sequence is C-C chemokine receptor type 5 (352 aa).

Residues 1–30 lie on the Extracellular side of the membrane; that stretch reads MDYQVSSPTYDIDYYTSGPCQKINVKQIAA. Tyr-3 carries the sulfotyrosine modification. Residues Ser-6 and Ser-7 are each glycosylated (O-linked (GalNAc...) serine). A sulfotyrosine mark is found at Tyr-10, Tyr-14, and Tyr-15. 2 cysteine pairs are disulfide-bonded: Cys-20–Cys-269 and Cys-101–Cys-178. The helical transmembrane segment at 31 to 58 threads the bilayer; that stretch reads RLLPPLYSLVFIFGFVGNMLVILILINC. The Cytoplasmic portion of the chain corresponds to 59–68; it reads KRLKSMTDIY. The chain crosses the membrane as a helical span at residues 69 to 89; that stretch reads LLNLAISDLFFLLTVPFWAHY. Over 90-102 the chain is Extracellular; the sequence is AAAQWDFGNTMCQ. A helical transmembrane segment spans residues 103-124; it reads LLTGLYFIGFFSGIFFIILLTI. The Cytoplasmic segment spans residues 125–141; that stretch reads DRYLAIVHAVFALKART. Residues 142-166 form a helical membrane-spanning segment; the sequence is VTFGVVTSVITWVVAVFASLPGIIF. Residues 167 to 198 lie on the Extracellular side of the membrane; the sequence is TRSQKEGLHYTCSSHFPYSQYQFWKNFQTLKI. Residues 199–218 traverse the membrane as a helical segment; that stretch reads VILGLVLPLLVMVICYSGIL. Residues 219 to 235 lie on the Cytoplasmic side of the membrane; that stretch reads KTLLRCRNEKKRHRAVR. A helical membrane pass occupies residues 236 to 260; sequence LIFTIMIVYFLFWAPYNIVLLLNTF. The Extracellular portion of the chain corresponds to 261–277; it reads QEFFGLNNCSSSNRLDQ. Residues 278-301 form a helical membrane-spanning segment; sequence AMQVTETLGMTHCCINPIIYAFVG. Residues 302-352 are Cytoplasmic-facing; it reads EKFRNYLLVFFQKHIAKHFCKCCSIFQQEAPERASSVYTRSTGEQEISVGL. S-palmitoyl cysteine attachment occurs at residues Cys-321, Cys-323, and Cys-324. A phosphoserine; by BARK1 mark is found at Ser-336, Ser-337, Ser-342, and Ser-349.

The protein belongs to the G-protein coupled receptor 1 family. In terms of assembly, interacts with PRAF2. Efficient ligand binding to CCL3/MIP-1alpha and CCL4/MIP-1beta requires sulfation, O-glycosylation and sialic acid modifications. Glycosylation on Ser-6 is required for efficient binding of CCL4. Interacts with GRK2. Interacts with ARRB1 and ARRB2. Interacts with CNIH4. Interacts with S100A4; this interaction stimulates T-lymphocyte chemotaxis. Post-translationally, sulfated on at least 2 of the N-terminal tyrosines. Sulfation is required for efficient binding of the chemokines, CCL3 and CCL4. In terms of processing, palmitoylation in the C-terminal is important for cell surface expression. Phosphorylation on serine residues in the C-terminal is stimulated by binding CC chemokines especially by APO-RANTES. Post-translationally, O-glycosylated, but not N-glycosylated. Ser-6 appears to be the major site even if Ser-7 may be also O-glycosylated. Also sialylated glycans present which contribute to chemokine binding. Thr-16 and Ser-17 may also be glycosylated and, if so, with small moieties such as a T-antigen.

Its subcellular location is the cell membrane. Functionally, receptor for a number of inflammatory CC-chemokines including CCL3/MIP-1-alpha, CCL4/MIP-1-beta and RANTES and subsequently transduces a signal by increasing the intracellular calcium ion level. May play a role in the control of granulocytic lineage proliferation or differentiation. Participates in T-lymphocyte migration to the infection site by acting as a chemotactic receptor. In Hylobates moloch (Silvery gibbon), this protein is C-C chemokine receptor type 5 (CCR5).